The following is a 101-amino-acid chain: Small ribosomal subunit protein uS14 (101 aa).

Belongs to the universal ribosomal protein uS14 family. In terms of assembly, part of the 30S ribosomal subunit. Contacts proteins S3 and S10.

Binds 16S rRNA, required for the assembly of 30S particles and may also be responsible for determining the conformation of the 16S rRNA at the A site. This chain is Small ribosomal subunit protein uS14, found in Stutzerimonas stutzeri (strain A1501) (Pseudomonas stutzeri).